The following is a 272-amino-acid chain: MADAETRLYGVIGFPARHSLSPVMHNAAFRALGINAVYLAFEVPPEELGEAIGGAKALGISGLNVTMPHKEAVIHFLDSLSEDSGEIGSVNTVVNRKGRLEGHTTDGLGARRALERAIELGGRRILIIGAGGAGKAIAYELSRDNEVVVLNRTPEKAKALERFGITGDALNRENLGEYLEWAEVLINATSVGMNSWETPVPAELLRRDLVVMDIVYKPLKTRLLTEAELRGCKTVDGLWMLVYQGIESFRLWTGFKPDEGLMRGAALEGISE.

Shikimate is bound by residues 19–21 (SLS) and threonine 66. The active-site Proton acceptor is the lysine 70. Glutamate 82 serves as a coordination point for NADP(+). The shikimate site is built by asparagine 91 and aspartate 106. NADP(+) is bound by residues 129-133 (GAGGA), 151-156 (NRTPEK), and isoleucine 214. Shikimate is bound at residue tyrosine 216. Glycine 237 contacts NADP(+).

The protein belongs to the shikimate dehydrogenase family. As to quaternary structure, homodimer.

It carries out the reaction shikimate + NADP(+) = 3-dehydroshikimate + NADPH + H(+). It participates in metabolic intermediate biosynthesis; chorismate biosynthesis; chorismate from D-erythrose 4-phosphate and phosphoenolpyruvate: step 4/7. Involved in the biosynthesis of the chorismate, which leads to the biosynthesis of aromatic amino acids. Catalyzes the reversible NADPH linked reduction of 3-dehydroshikimate (DHSA) to yield shikimate (SA). The chain is Shikimate dehydrogenase (NADP(+)) from Thermococcus kodakarensis (strain ATCC BAA-918 / JCM 12380 / KOD1) (Pyrococcus kodakaraensis (strain KOD1)).